The chain runs to 41 residues: Large ribosomal subunit protein bL36 (41 aa).

Belongs to the bacterial ribosomal protein bL36 family.

The polypeptide is Large ribosomal subunit protein bL36 (Bartonella bacilliformis (strain ATCC 35685 / KC583 / Herrer 020/F12,63)).